A 259-amino-acid polypeptide reads, in one-letter code: Bis(5'-nucleosyl)-tetraphosphatase, symmetrical (259 aa).

It belongs to the Ap4A hydrolase family.

The catalysed reaction is P(1),P(4)-bis(5'-adenosyl) tetraphosphate + H2O = 2 ADP + 2 H(+). Hydrolyzes diadenosine 5',5'''-P1,P4-tetraphosphate to yield ADP. The chain is Bis(5'-nucleosyl)-tetraphosphatase, symmetrical (apaH) from Klebsiella aerogenes (Enterobacter aerogenes).